The sequence spans 458 residues: Probable Xaa-Pro aminopeptidase pepP (458 aa).

The Mn(2+) site is built by Asp254, Asp265, Glu388, and Glu428.

Belongs to the peptidase M24B family. It depends on Mn(2+) as a cofactor.

It catalyses the reaction Release of any N-terminal amino acid, including proline, that is linked to proline, even from a dipeptide or tripeptide.. Functionally, catalyzes the removal of a penultimate prolyl residue from the N-termini of peptides. This chain is Probable Xaa-Pro aminopeptidase pepP (pepP), found in Botryotinia fuckeliana (strain B05.10) (Noble rot fungus).